Here is a 421-residue protein sequence, read N- to C-terminus: Medium-chain specific acyl-CoA dehydrogenase, mitochondrial (421 aa).

The N-terminal 25 residues, 1 to 25, are a transit peptide targeting the mitochondrion; sequence MAAGFGRCCRVLRSISRFQWRSQHT. Lys-69 is modified (N6-acetyllysine; alternate). Lys-69 is subject to N6-succinyllysine; alternate. 158–167 serves as a coordination point for FAD; sequence YCVTEPGAGS. Ser-167 serves as a coordination point for octanoyl-CoA. Residue Lys-179 is modified to N6-succinyllysine. 191–193 contacts FAD; the sequence is WIT. N6-acetyllysine; alternate is present on residues Lys-212, Lys-217, and Lys-271. 3 positions are modified to N6-succinyllysine; alternate: Lys-212, Lys-217, and Lys-271. Asp-278 is an octanoyl-CoA binding site. At Lys-279 the chain carries N6-acetyllysine. Residue Arg-281 participates in octanoyl-CoA binding. Residue Lys-301 is modified to N6-acetyllysine. Residues 306-308 and 316-317 contribute to the FAD site; these read RKT and HQ. Octanoyl-CoA-binding residues include Arg-349 and Thr-351. Thr-351 is subject to Phosphothreonine. 374 to 378 provides a ligand contact to FAD; it reads QILGG. An octanoyl-CoA-binding site is contributed by Glu-401. Glu-401 acts as the Proton acceptor in catalysis. Position 402–405 (402–405) interacts with FAD; that stretch reads GTSQ.

Belongs to the acyl-CoA dehydrogenase family. As to quaternary structure, homotetramer. Interacts with the heterodimeric electron transfer flavoprotein ETF. The cofactor is FAD. Post-translationally, acetylated. Could occur at proximity of the cofactor-binding sites and reduce the catalytic activity. Could be deacetylated by SIRT3.

It localises to the mitochondrion matrix. The catalysed reaction is a medium-chain 2,3-saturated fatty acyl-CoA + oxidized [electron-transfer flavoprotein] + H(+) = a medium-chain (2E)-enoyl-CoA + reduced [electron-transfer flavoprotein]. The enzyme catalyses pentanoyl-CoA + oxidized [electron-transfer flavoprotein] + H(+) = (2E)-pentenoyl-CoA + reduced [electron-transfer flavoprotein]. It carries out the reaction hexanoyl-CoA + oxidized [electron-transfer flavoprotein] + H(+) = (2E)-hexenoyl-CoA + reduced [electron-transfer flavoprotein]. It catalyses the reaction octanoyl-CoA + oxidized [electron-transfer flavoprotein] + H(+) = (2E)-octenoyl-CoA + reduced [electron-transfer flavoprotein]. The catalysed reaction is decanoyl-CoA + oxidized [electron-transfer flavoprotein] + H(+) = (2E)-decenoyl-CoA + reduced [electron-transfer flavoprotein]. The enzyme catalyses dodecanoyl-CoA + oxidized [electron-transfer flavoprotein] + H(+) = (2E)-dodecenoyl-CoA + reduced [electron-transfer flavoprotein]. It carries out the reaction tetradecanoyl-CoA + oxidized [electron-transfer flavoprotein] + H(+) = (2E)-tetradecenoyl-CoA + reduced [electron-transfer flavoprotein]. It catalyses the reaction oxidized [electron-transfer flavoprotein] + hexadecanoyl-CoA + H(+) = (2E)-hexadecenoyl-CoA + reduced [electron-transfer flavoprotein]. It functions in the pathway lipid metabolism; mitochondrial fatty acid beta-oxidation. Medium-chain specific acyl-CoA dehydrogenase is one of the acyl-CoA dehydrogenases that catalyze the first step of mitochondrial fatty acid beta-oxidation, an aerobic process breaking down fatty acids into acetyl-CoA and allowing the production of energy from fats. The first step of fatty acid beta-oxidation consists in the removal of one hydrogen from C-2 and C-3 of the straight-chain fatty acyl-CoA thioester, resulting in the formation of trans-2-enoyl-CoA. Electron transfer flavoprotein (ETF) is the electron acceptor that transfers electrons to the main mitochondrial respiratory chain via ETF-ubiquinone oxidoreductase (ETF dehydrogenase). Among the different mitochondrial acyl-CoA dehydrogenases, medium-chain specific acyl-CoA dehydrogenase acts specifically on acyl-CoAs with saturated 6 to 12 carbons long primary chains. This Pan troglodytes (Chimpanzee) protein is Medium-chain specific acyl-CoA dehydrogenase, mitochondrial.